Here is a 119-residue protein sequence, read N- to C-terminus: Large ribosomal subunit protein bL20c (119 aa).

This sequence belongs to the bacterial ribosomal protein bL20 family.

Its subcellular location is the plastid. It localises to the chloroplast. Binds directly to 23S ribosomal RNA and is necessary for the in vitro assembly process of the 50S ribosomal subunit. It is not involved in the protein synthesizing functions of that subunit. The sequence is that of Large ribosomal subunit protein bL20c from Saccharum hybrid (Sugarcane).